Consider the following 254-residue polypeptide: Ribosomal RNA small subunit methyltransferase J (254 aa).

Residues 107–108 (RD), 123–124 (ER), and Asp177 each bind S-adenosyl-L-methionine.

This sequence belongs to the methyltransferase superfamily. RsmJ family.

It is found in the cytoplasm. It catalyses the reaction guanosine(1516) in 16S rRNA + S-adenosyl-L-methionine = N(2)-methylguanosine(1516) in 16S rRNA + S-adenosyl-L-homocysteine + H(+). Its function is as follows. Specifically methylates the guanosine in position 1516 of 16S rRNA. This Histophilus somni (strain 2336) (Haemophilus somnus) protein is Ribosomal RNA small subunit methyltransferase J.